The chain runs to 346 residues: N-acetyl-gamma-glutamyl-phosphate reductase (346 aa).

Residue C149 is part of the active site.

This sequence belongs to the NAGSA dehydrogenase family. Type 1 subfamily.

The protein resides in the cytoplasm. It catalyses the reaction N-acetyl-L-glutamate 5-semialdehyde + phosphate + NADP(+) = N-acetyl-L-glutamyl 5-phosphate + NADPH + H(+). It participates in amino-acid biosynthesis; L-arginine biosynthesis; N(2)-acetyl-L-ornithine from L-glutamate: step 3/4. Functionally, catalyzes the NADPH-dependent reduction of N-acetyl-5-glutamyl phosphate to yield N-acetyl-L-glutamate 5-semialdehyde. This Geobacter metallireducens (strain ATCC 53774 / DSM 7210 / GS-15) protein is N-acetyl-gamma-glutamyl-phosphate reductase.